Here is a 125-residue protein sequence, read N- to C-terminus: Temptin (125 aa).

A signal peptide spans 1–22; it reads MEQKRTLRVFLAVSLLCALANA. 2 cysteine pairs are disulfide-bonded: C40/C125 and C79/C99. The tract at residues 78–125 is disordered; sequence LCDMDSDGDGRSNGVELGDPECVWSQGETPARTTDLSHPGFDEATVSC. A compositionally biased stretch (polar residues) spans 103–113; the sequence is QGETPARTTDL.

In terms of assembly, binds to attractin and enticin. Produced by the albumen gland of the egg cordons.

The protein resides in the secreted. In terms of biological role, a component of the complex of water-borne protein pheromones that stimulates attraction and mating behavior. Modulates pheromone signaling by direct binding to attractin. This Aplysia californica (California sea hare) protein is Temptin.